The sequence spans 485 residues: Probable serine/threonine-protein kinase nek1 (485 aa).

Positions 12-283 (YLIKSQIGSG…TQQILEQVFI (272 aa)) constitute a Protein kinase domain. Residues 18–26 (IGSGSYGNT) and K41 contribute to the ATP site. D136 serves as the catalytic Proton acceptor. The span at 354-365 (KNQQQQSPQKLE) shows a compositional bias: polar residues. Positions 354-419 (KNQQQQSPQK…NNDKNNNINN (66 aa)) are disordered. Positions 366–419 (NNNNNNNDNNNNNNNNNNNNNNNNNNNNNNNNNNNNNNNNNNNNNNDKNNNINN) are enriched in low complexity.

This sequence belongs to the protein kinase superfamily. NEK Ser/Thr protein kinase family. NIMA subfamily.

The catalysed reaction is L-seryl-[protein] + ATP = O-phospho-L-seryl-[protein] + ADP + H(+). The enzyme catalyses L-threonyl-[protein] + ATP = O-phospho-L-threonyl-[protein] + ADP + H(+). The chain is Probable serine/threonine-protein kinase nek1 (nek1) from Dictyostelium discoideum (Social amoeba).